Consider the following 121-residue polypeptide: Ubiquitin-related modifier 1 (121 aa).

The residue at position 121 (Gly121) is a 1-thioglycine. Gly121 participates in a covalent cross-link: Glycyl lysine isopeptide (Gly-Lys) (interchain with K-? in acceptor proteins).

The protein belongs to the URM1 family. In terms of processing, C-terminal thiocarboxylation occurs in 2 steps, it is first acyl-adenylated (-COAMP) via the hesA/moeB/thiF part of UBA4, then thiocarboxylated (-COSH) via the rhodanese domain of UBA4.

It localises to the cytoplasm. Its pathway is tRNA modification; 5-methoxycarbonylmethyl-2-thiouridine-tRNA biosynthesis. In terms of biological role, acts as a sulfur carrier required for 2-thiolation of mcm(5)S(2)U at tRNA wobble positions of cytosolic tRNA(Lys), tRNA(Glu) and tRNA(Gln). Serves as sulfur donor in tRNA 2-thiolation reaction by being thiocarboxylated (-COSH) at its C-terminus by the MOCS3 homolog UBA4. The sulfur is then transferred to tRNA to form 2-thiolation of mcm(5)S(2)U. Prior mcm(5) tRNA modification by the elongator complex is required for 2-thiolation. Also acts as a ubiquitin-like protein (UBL) that is covalently conjugated via an isopeptide bond to lysine residues of target proteins such as AHP1. The thiocarboxylated form serves as substrate for conjugation and oxidative stress specifically induces the formation of UBL-protein conjugates. The polypeptide is Ubiquitin-related modifier 1 (Ajellomyces capsulatus (strain NAm1 / WU24) (Darling's disease fungus)).